Consider the following 153-residue polypeptide: Vasotocin-neurophysin VT 1 (153 aa).

Residues 1-20 (MPYSTFPLLWVLGLLALSSA) form the signal peptide. Cys21 and Cys26 are oxidised to a cystine. Gly29 carries the post-translational modification Glycine amide. 7 disulfide bridges follow: Cys41–Cys85, Cys44–Cys58, Cys52–Cys75, Cys59–Cys65, Cys92–Cys104, Cys98–Cys116, and Cys105–Cys110.

It belongs to the vasopressin/oxytocin family. In terms of processing, seven disulfide bonds are present in neurophysin.

It localises to the secreted. In terms of biological role, vasotocin is an antidiuretic hormone. This chain is Vasotocin-neurophysin VT 1, found in Oncorhynchus keta (Chum salmon).